The chain runs to 160 residues: Major strawberry allergen Fra a 1-B (160 aa).

Belongs to the BetVI family. As to quaternary structure, monomer.

The sequence is that of Major strawberry allergen Fra a 1-B from Fragaria ananassa (Strawberry).